Consider the following 515-residue polypeptide: Histidine ammonia-lyase (515 aa).

Positions 146 to 148 (ASG) form a cross-link, 5-imidazolinone (Ala-Gly). Ser147 is modified (2,3-didehydroalanine (Ser)).

The protein belongs to the PAL/histidase family. Contains an active site 4-methylidene-imidazol-5-one (MIO), which is formed autocatalytically by cyclization and dehydration of residues Ala-Ser-Gly.

The protein localises to the cytoplasm. It catalyses the reaction L-histidine = trans-urocanate + NH4(+). Its pathway is amino-acid degradation; L-histidine degradation into L-glutamate; N-formimidoyl-L-glutamate from L-histidine: step 1/3. The protein is Histidine ammonia-lyase (hutH) of Ralstonia nicotianae (strain ATCC BAA-1114 / GMI1000) (Ralstonia solanacearum).